The chain runs to 478 residues: ATP synthase subunit beta (478 aa).

158-165 (GGAGVGKT) serves as a coordination point for ATP.

The protein belongs to the ATPase alpha/beta chains family. F-type ATPases have 2 components, CF(1) - the catalytic core - and CF(0) - the membrane proton channel. CF(1) has five subunits: alpha(3), beta(3), gamma(1), delta(1), epsilon(1). CF(0) has three main subunits: a(1), b(2) and c(9-12). The alpha and beta chains form an alternating ring which encloses part of the gamma chain. CF(1) is attached to CF(0) by a central stalk formed by the gamma and epsilon chains, while a peripheral stalk is formed by the delta and b chains.

It localises to the cell inner membrane. The enzyme catalyses ATP + H2O + 4 H(+)(in) = ADP + phosphate + 5 H(+)(out). Its function is as follows. Produces ATP from ADP in the presence of a proton gradient across the membrane. The catalytic sites are hosted primarily by the beta subunits. In Rhizobium johnstonii (strain DSM 114642 / LMG 32736 / 3841) (Rhizobium leguminosarum bv. viciae), this protein is ATP synthase subunit beta.